Reading from the N-terminus, the 968-residue chain is RNA polymerase-associated protein RapA (968 aa).

The Helicase ATP-binding domain maps to 164–334 (EVGQRHAPRV…FARLRLLDPD (171 aa)). 177–184 (DEVGLGKT) contributes to the ATP binding site. The short motif at 280-283 (DEAH) is the DEAH box element. The Helicase C-terminal domain occupies 490–644 (RVEWLLNYLV…TCPTGRTIYD (155 aa)).

It belongs to the SNF2/RAD54 helicase family. RapA subfamily. In terms of assembly, interacts with the RNAP. Has a higher affinity for the core RNAP than for the holoenzyme. Its ATPase activity is stimulated by binding to RNAP.

Its function is as follows. Transcription regulator that activates transcription by stimulating RNA polymerase (RNAP) recycling in case of stress conditions such as supercoiled DNA or high salt concentrations. Probably acts by releasing the RNAP, when it is trapped or immobilized on tightly supercoiled DNA. Does not activate transcription on linear DNA. Probably not involved in DNA repair. The protein is RNA polymerase-associated protein RapA of Yersinia pseudotuberculosis serotype O:1b (strain IP 31758).